The chain runs to 461 residues: UDP-N-acetylmuramate--L-alanine ligase (461 aa).

Residue 112–118 coordinates ATP; sequence GTHGKTT.

This sequence belongs to the MurCDEF family.

The protein resides in the cytoplasm. The enzyme catalyses UDP-N-acetyl-alpha-D-muramate + L-alanine + ATP = UDP-N-acetyl-alpha-D-muramoyl-L-alanine + ADP + phosphate + H(+). The protein operates within cell wall biogenesis; peptidoglycan biosynthesis. Its function is as follows. Cell wall formation. The polypeptide is UDP-N-acetylmuramate--L-alanine ligase (Hydrogenovibrio crunogenus (strain DSM 25203 / XCL-2) (Thiomicrospira crunogena)).